A 422-amino-acid chain; its full sequence is Lactoyl-CoA dehydratase subunit alpha (422 aa).

It belongs to the FldB/FldC dehydratase alpha/beta subunit family. In terms of assembly, heterodimer of an alpha (LcdA) and a beta (LcdB) subunit. [4Fe-4S] cluster serves as cofactor. The cofactor is FMN. Requires riboflavin as cofactor. Mg(2+) is required as a cofactor.

The enzyme catalyses (R)-lactoyl-CoA = acryloyl-CoA + H2O. It carries out the reaction (2R)-hydroxybutanoyl-CoA = (2E)-butenoyl-CoA + H2O. With respect to regulation, activated by the LcdC protein. Functionally, involved in the acrylate pathway for the conversion of D-lactic acid to propionic acid. Catalyzes the reversible dehydration of Lactoyl-CoA and 2-hydroxybutyroyl-CoA to acryloyl-CoA and crotonyl-CoA, respectively. The chain is Lactoyl-CoA dehydratase subunit alpha (lcdA) from Anaerotignum propionicum (Clostridium propionicum).